The sequence spans 1849 residues: Brefeldin A-inhibited guanine nucleotide-exchange protein 1 (1849 aa).

Residues 2–224 (YEGKKTKNMF…QEAKQMEKER (223 aa)) are DCB; DCB:DCB domain and DCB:HUS domain interaction. Positions 46 to 58 (AETEKQSPPHGEA) are enriched in basic and acidic residues. Disordered regions lie at residues 46 to 65 (AETE…SSTL), 216 to 248 (EAKQ…QLRY), 267 to 302 (LHTN…DQAT), and 378 to 413 (TPIS…SPGA). At Ser-52 the chain carries Phosphoserine. The span at 267 to 277 (LHTNDVDKSLQ) shows a compositional bias: basic and acidic residues. Residues Ser-286, Ser-289, Ser-290, Ser-397, and Ser-410 each carry the phosphoserine modification. Positions 394–409 (SVSSNDTQESGNSSGP) are enriched in polar residues. The segment at 557-577 (ADAQSVVDIYVNYDCDLNAAN) is HUS; DCB:HUS domain interaction. The SEC7 domain occupies 709-840 (FNKKPKRGIQ…IIMLTTDLHS (132 aa)). Residues 711 to 715 (KKPKR) carry the Nuclear localization signal (NLS) motif. Residue Ser-1079 is modified to Phosphoserine. The segment at 1543 to 1562 (RPNSGETAPPPPSPVSEKPL) is disordered. Ser-1566 and Ser-1569 each carry phosphoserine.

In terms of assembly, homodimer. Interacts with ARFGEF2/BIG2; both proteins are probably part of the same or very similar macromolecular complexes. Interacts with FKBP2. Interacts with MYO9B. Interacts with PRKAR1A and PRKAR2A. Interacts with PPP1CC. Interacts with NCL, FBL, NUP62 and U3 small nucleolar RNA. Interacts with DPY30. Interacts with PDE3A. Interacts with KANK1. Interacts with TBC1D22A and TBC1D22B. Interacts (via N-terminus) with ARL1. Post-translationally, phosphorylated. In vitro phosphorylated by PKA reducing its GEF activity and dephosphorylated by phosphatase PP1. In terms of tissue distribution, expressed in placenta, lung, heart, brain, kidney and pancreas.

It is found in the cytoplasm. The protein resides in the perinuclear region. The protein localises to the golgi apparatus. It localises to the trans-Golgi network membrane. Its subcellular location is the nucleus. It is found in the nucleolus. The protein resides in the nucleus matrix. Its activity is regulated as follows. Inhibited by brefeldin A. Promotes guanine-nucleotide exchange on ARF1 and ARF3. Promotes the activation of ARF1/ARF3 through replacement of GDP with GTP. Involved in vesicular trafficking. Required for the maintenance of Golgi structure; the function may be independent of its GEF activity. Required for the maturation of integrin beta-1 in the Golgi. Involved in the establishment and persistence of cell polarity during directed cell movement in wound healing. Proposed to act as A kinase-anchoring protein (AKAP) and may mediate crosstalk between Arf and PKA pathways. Inhibits GAP activity of MYO9B probably through competitive RhoA binding. The function in the nucleus remains to be determined. This Homo sapiens (Human) protein is Brefeldin A-inhibited guanine nucleotide-exchange protein 1 (ARFGEF1).